Consider the following 96-residue polypeptide: Envelope glycoprotein N (96 aa).

The N-terminal stretch at 1–21 is a signal peptide; the sequence is MPRSPLIVAVVAAALFAIVRG. Topologically, residues 22–54 are virion surface; sequence RDPLLDAMRREGAMDFWSAGCYARGVPLSEPPQ. The chain crosses the membrane as a helical span at residues 55–75; sequence ALVVFYVALTAVMVAVALYAY. Topologically, residues 76–96 are intravirion; that stretch reads GLCFRLMGASGPNKKESRGRG.

This sequence belongs to the herpesviridae glycoprotein N family. In terms of assembly, interacts (via N-terminus) with gM (via N-terminus). The gM-gN heterodimer forms the gCII complex.

Its subcellular location is the virion membrane. The protein localises to the host membrane. It localises to the host Golgi apparatus. It is found in the host trans-Golgi network. Its function is as follows. Envelope glycoprotein necessary for proper maturation of gM and modulation of its membrane fusion activity. Also plays a critical role in virion morphogenesis. The chain is Envelope glycoprotein N from Bos taurus (Bovine).